The sequence spans 471 residues: Siroheme synthase (471 aa).

Positions 1 to 203 (MDYLPLFADI…GDWESAEKTL (203 aa)) are precorrin-2 dehydrogenase /sirohydrochlorin ferrochelatase. Residues 22 to 23 (EV) and 43 to 44 (KN) each bind NAD(+). S128 carries the post-translational modification Phosphoserine. Positions 215 to 471 (GEIILVGAGP…DTKSSLINLA (257 aa)) are uroporphyrinogen-III C-methyltransferase. P224 contacts S-adenosyl-L-methionine. D247 functions as the Proton acceptor in the catalytic mechanism. The Proton donor role is filled by K269. Residues 300-302 (GGD), I305, 330-331 (TA), M382, and A411 contribute to the S-adenosyl-L-methionine site.

It in the N-terminal section; belongs to the precorrin-2 dehydrogenase / sirohydrochlorin ferrochelatase family. In the C-terminal section; belongs to the precorrin methyltransferase family.

The enzyme catalyses uroporphyrinogen III + 2 S-adenosyl-L-methionine = precorrin-2 + 2 S-adenosyl-L-homocysteine + H(+). It catalyses the reaction precorrin-2 + NAD(+) = sirohydrochlorin + NADH + 2 H(+). The catalysed reaction is siroheme + 2 H(+) = sirohydrochlorin + Fe(2+). It functions in the pathway cofactor biosynthesis; adenosylcobalamin biosynthesis; precorrin-2 from uroporphyrinogen III: step 1/1. Its pathway is cofactor biosynthesis; adenosylcobalamin biosynthesis; sirohydrochlorin from precorrin-2: step 1/1. The protein operates within porphyrin-containing compound metabolism; siroheme biosynthesis; precorrin-2 from uroporphyrinogen III: step 1/1. It participates in porphyrin-containing compound metabolism; siroheme biosynthesis; siroheme from sirohydrochlorin: step 1/1. It functions in the pathway porphyrin-containing compound metabolism; siroheme biosynthesis; sirohydrochlorin from precorrin-2: step 1/1. Multifunctional enzyme that catalyzes the SAM-dependent methylations of uroporphyrinogen III at position C-2 and C-7 to form precorrin-2 via precorrin-1. Then it catalyzes the NAD-dependent ring dehydrogenation of precorrin-2 to yield sirohydrochlorin. Finally, it catalyzes the ferrochelation of sirohydrochlorin to yield siroheme. The protein is Siroheme synthase of Zymomonas mobilis subsp. mobilis (strain ATCC 31821 / ZM4 / CP4).